Here is a 723-residue protein sequence, read N- to C-terminus: ATP-dependent DNA helicase RRM3 (723 aa).

Disordered stretches follow at residues 1-31 (MFRS…SGSH) and 61-101 (DLES…DDDP). Serine 64 carries the post-translational modification Phosphoserine. Residues 83–96 (NNSSSLFSQSQGSF) show a composition bias toward low complexity. An ATP-binding site is contributed by 254–261 (GSAGTGKS). The DNA-binding element occupies 682 to 701 (QVYVALSRAVTMDTLQVLNF).

Belongs to the helicase family. Interacts with DEF1 and POL30.

The protein resides in the nucleus. Its subcellular location is the chromosome. The protein localises to the telomere. The catalysed reaction is Couples ATP hydrolysis with the unwinding of duplex DNA at the replication fork by translocating in the 5'-3' direction. This creates two antiparallel DNA single strands (ssDNA). The leading ssDNA polymer is the template for DNA polymerase III holoenzyme which synthesizes a continuous strand.. It carries out the reaction ATP + H2O = ADP + phosphate + H(+). In terms of biological role, 5' to 3' DNA replicative helicase recruited to paused replisomes to promote fork progression throughout nonhistone protein-DNA complexes, naturally occurring impediments that are encountered in each S phase where replication forks pauses. Needed for normal fork progression through over 1000 discrete sites scattered throughout the genome, like rDNA, tRNA genes, centromeres, active replication origins, or transcriptional silencers. Required for timely replication of the telomere and subtelomeric DNA and for wild-type levels of telomeric silencing. Involved in regulation of Ty1 transposition and protects the genome from instability at nascent sites of retrotransposition. Involved in DNA repair during stalled replication fork, regulation of fragile sites expression and essential for genome stability. Also plays a role in mtDNA replication. Has G-quadruplex (G4) unwinding activity and can suppress G4-induced genome instability when PIF1 levels are low. This chain is ATP-dependent DNA helicase RRM3, found in Saccharomyces cerevisiae (strain ATCC 204508 / S288c) (Baker's yeast).